A 196-amino-acid chain; its full sequence is Translation machinery-associated protein 22 (196 aa).

The region spanning 111-182 (IIIKRIERNK…EAKEYIEKLL (72 aa)) is the SUI1 domain.

Belongs to the DENR family. In terms of assembly, interacts with the 40S ribosomal subunit.

Its subcellular location is the cytoplasm. In Lodderomyces elongisporus (strain ATCC 11503 / CBS 2605 / JCM 1781 / NBRC 1676 / NRRL YB-4239) (Yeast), this protein is Translation machinery-associated protein 22 (TMA22).